Consider the following 114-residue polypeptide: UPF0342 protein LCABL_19440 (114 aa).

This sequence belongs to the UPF0342 family.

The chain is UPF0342 protein LCABL_19440 from Lacticaseibacillus casei (strain BL23) (Lactobacillus casei).